Reading from the N-terminus, the 607-residue chain is MSSGLRAADFPRWKRHIAEELRRRDRLQRQAFEEIILQYTKLLEKSDLHSVLTQKLQAEKHDMPNRHEISPGHDGAWNDSQLQEMAQLRIKHQEELTELHKKRGELAQLVIDLNNQMQQKDKEIQMNEAKISEYLQTISDLETNCLDLRTKLQDLEVANQTLKDEYDALQITFTALEEKLRKTTEENQELVTRWMAEKAQEANRLNAENEKDSRRRQARLQKELAEAAKEPLPVEQDDDIEVIVDETSDHTEETSPVRAVSRAATKRLSQPAGGLLDSITNIFGRRSVSSIPVPQDIMDTHPASGKDVRVPTTASYVFDAHDGEVNAVQFSPGSRLLATGGMDRRVKLWEAFGDKCEFKGSLSGSNAGITSIEFDSAGAYLLAASNDFASRIWTVDDYRLRHTLTGHSGKVLSAKFLLDNARIVSGSHDRTLKLWDLRSKVCIKTVFAGSSCNDIVCTEQCVMSGHFDKKIRFWDIRSESVVREMELLGKITALDLNPERTELLSCSRDDLLKVIDLRTNAVKQTFSAPGFKCGSDWTRVVFSPDGSYVAAGSAEGSLYVWSVLTGKVEKVLSKQHSSSINAVAWAPSGLHVVSVDKGSRAVLWAQP.

Positions 13-43 are interaction with ATG5; it reads WKRHIAEELRRRDRLQRQAFEEIILQYTKLL. Residues 79-230 are a coiled coil; the sequence is DSQLQEMAQL…QKELAEAAKE (152 aa). Ser-139 is subject to Phosphoserine. The WIPI2-binding stretch occupies residues 207–230; it reads AENEKDSRRRQARLQKELAEAAKE. Residues 230 to 242 are RB1CC1-binding; that stretch reads EPLPVEQDDDIEV. Residues Ser-269 and Ser-287 each carry the phosphoserine modification. The Caspase cleavage motif lies at 296 to 299; sequence DIMD. WD repeat units follow at residues 320-359, 364-403, 406-445, 447-484, 486-525, 532-573, and 575-607; these read AHDGEVNAVQFSPGSRLLATGGMDRRVKLWEAFGDKCEFK, GSNAGITSIEFDSAGAYLLAASNDFASRIWTVDDYRLRHT, GHSGKVLSAKFLLDNARIVSGSHDRTLKLWDLRSKVCIKT, FAGSSCNDIVCTEQCVMSGHFDKKIRFWDIRSESVVRE, ELLGKITALDLNPERTELLSCSRDDLLKVIDLRTNAVKQT, KCGS…KVLS, and QHSSSINAVAWAPSGLHVVSVDKGSRAVLWAQP.

The protein belongs to the WD repeat ATG16 family. In terms of assembly, homodimer. Homooligomer. Heterooligomer with ATG16L2. Interacts with WIPI1. Interacts with WIPI2. Interacts with RB1CC1; the interaction is required for ULK1 complex-dependent autophagy. Interacts with ATG5. Part of the minor complex composed of 4 sets of ATG12-ATG5 and ATG16L1 (400 kDa); this complex interacts with ATG3 leading to disruption of ATG7 interaction and promotion of ATG8-like proteins lipidation. Part of the major complex composed of 8 sets of ATG12-ATG5 and ATG16L1 (800 kDa). Interacts with RAB33B (GTP- and GDP-bound forms); the complex consists of a tetramer where two RAB33B molecules bind independently one molecule of the ATG16L1 homodimer; the interaction promotes ATG12-ATG5-ATG16L1 complex recruitment to phagophores. Interacts (via WD repeats) with TMEM59; the interaction mediates unconventional autophagic activity of TMEM59. Interacts with TLR2. Interacts (via WD repeats) with MEFV. Interacts (via N-terminal) with CLTC. Interacts with NOD1. Interacts with NOD2. Interacts with TUFM. Interacts with TRIM16. Interacts (via WD repeats) with SPATA33. Interacts with Irgm1. Post-translationally, proteolytic cleavage by activated CASP3 leads to degradation and may regulate autophagy upon cellular stress and apoptotic stimuli. Phosphorylation at Ser-139 promotes association with the ATG12-ATG5 conjugate to form the ATG12-ATG5-ATG16L1 complex. As to expression, widely expressed. Expressed in the testis and sperm midpiece (at protein level). Expressed in liver. In terms of tissue distribution, highly expressed in liver. As to expression, expressed in brain.

Its subcellular location is the cytoplasm. The protein localises to the preautophagosomal structure membrane. The protein resides in the endosome membrane. It is found in the lysosome membrane. In terms of biological role, plays an essential role in both canonical and non-canonical autophagy: interacts with ATG12-ATG5 to mediate the lipidation to ATG8 family proteins (MAP1LC3A, MAP1LC3B, MAP1LC3C, GABARAPL1, GABARAPL2 and GABARAP). Acts as a molecular hub, coordinating autophagy pathways via distinct domains that support either canonical or non-canonical signaling. During canonical autophagy, interacts with ATG12-ATG5 to mediate the conjugation of phosphatidylethanolamine (PE) to ATG8 proteins, to produce a membrane-bound activated form of ATG8. Thereby, controls the elongation of the nascent autophagosomal membrane. As part of the ATG8 conjugation system with ATG5 and ATG12, required for recruitment of LRRK2 to stressed lysosomes and induction of LRRK2 kinase activity in response to lysosomal stress. Also involved in non-canonical autophagy, a parallel pathway involving conjugation of ATG8 proteins to single membranes at endolysosomal compartments, probably by catalyzing conjugation of phosphatidylserine (PS) to ATG8. Non-canonical autophagy plays a key role in epithelial cells to limit lethal infection by influenza A (IAV) virus. Regulates mitochondrial antiviral signaling (MAVS)-dependent type I interferon (IFN-I) production. Negatively regulates NOD1- and NOD2-driven inflammatory cytokine response. Instead, promotes an autophagy-dependent antibacterial pathway together with NOD1 or NOD2. Plays a role in regulating morphology and function of Paneth cell. The sequence is that of Autophagy-related protein 16-1 from Mus musculus (Mouse).